Reading from the N-terminus, the 194-residue chain is Peptidyl-tRNA hydrolase (194 aa).

Tyr-17 is a binding site for tRNA. His-22 (proton acceptor) is an active-site residue. Positions 69, 71, and 117 each coordinate tRNA.

The protein belongs to the PTH family. Monomer.

Its subcellular location is the cytoplasm. The enzyme catalyses an N-acyl-L-alpha-aminoacyl-tRNA + H2O = an N-acyl-L-amino acid + a tRNA + H(+). Functionally, hydrolyzes ribosome-free peptidyl-tRNAs (with 1 or more amino acids incorporated), which drop off the ribosome during protein synthesis, or as a result of ribosome stalling. Its function is as follows. Catalyzes the release of premature peptidyl moieties from peptidyl-tRNA molecules trapped in stalled 50S ribosomal subunits, and thus maintains levels of free tRNAs and 50S ribosomes. The protein is Peptidyl-tRNA hydrolase of Renibacterium salmoninarum (strain ATCC 33209 / DSM 20767 / JCM 11484 / NBRC 15589 / NCIMB 2235).